The primary structure comprises 166 residues: MAAEAAATSRFAAACGALSQYVRAADNVHRARTAAAAAAVRPLPLMPGADVAGDEREEEGGGAAASSAAAQMTIFYGGRVLVLDECPADRAAALLRLAASSRGVPRDDLASTAAAAGESADLPVARKASLQRFMEKRKGRLAARGQPYRRHDAAAAARGDHLALAL.

The region spanning 65–100 (ASSAAAQMTIFYGGRVLVLDECPADRAAALLRLAAS) is the Tify domain. Positions 123–148 (PVARKASLQRFMEKRKGRLAARGQPY) match the Jas motif. A Nuclear localization signal motif is present at residues 125 to 132 (ARKASLQR).

The protein belongs to the TIFY/JAZ family. Ubiquitinated. Targeted for degradation by the SCF(COI1) E3 ubiquitin ligase-proteasome pathway during jasmonate signaling.

The protein localises to the nucleus. Functionally, repressor of jasmonate responses. The protein is Protein TIFY 11e of Oryza sativa subsp. japonica (Rice).